The sequence spans 155 residues: MRLVIVAVGQRVPDWAQTAWDDYAKRFPFELKVELKAVKTEPRGSKTVEALVAAERGRIEAALPKGCRIVALDERGTPLTTLALAAKLQNWQLESDDVALVIGGPDGLDPAFKQAAHERIRLSDLTLPHAMVRVLLIEQLYRAWSINANHPYHRE.

S-adenosyl-L-methionine-binding positions include Leu-72, Gly-103, and 122–127; that span reads LSDLTL.

This sequence belongs to the RNA methyltransferase RlmH family. As to quaternary structure, homodimer.

The protein resides in the cytoplasm. It catalyses the reaction pseudouridine(1915) in 23S rRNA + S-adenosyl-L-methionine = N(3)-methylpseudouridine(1915) in 23S rRNA + S-adenosyl-L-homocysteine + H(+). Specifically methylates the pseudouridine at position 1915 (m3Psi1915) in 23S rRNA. This Albidiferax ferrireducens (strain ATCC BAA-621 / DSM 15236 / T118) (Rhodoferax ferrireducens) protein is Ribosomal RNA large subunit methyltransferase H.